The primary structure comprises 642 residues: Arginine--tRNA ligase (642 aa).

The short motif at 133-143 (VNPTKPLHMGH) is the 'HIGH' region element.

Belongs to the class-I aminoacyl-tRNA synthetase family.

It is found in the cytoplasm. It carries out the reaction tRNA(Arg) + L-arginine + ATP = L-arginyl-tRNA(Arg) + AMP + diphosphate. This chain is Arginine--tRNA ligase, found in Thermococcus kodakarensis (strain ATCC BAA-918 / JCM 12380 / KOD1) (Pyrococcus kodakaraensis (strain KOD1)).